The following is a 162-amino-acid chain: Caveolin-2 (162 aa).

Residues 1 to 86 (MGLETEKTDV…FEISKYVMYK (86 aa)) are Cytoplasmic-facing. At Tyr19 the chain carries Phosphotyrosine; by SRC. Phosphoserine is present on residues Ser20 and Ser23. Phosphotyrosine; by SRC is present on Tyr27. Ser36 bears the Phosphoserine mark. An intramembrane region (helical) is located at residues 87-107 (FLTVFLAIPLAFLAGILFATL). At 108-162 (SCLHIWIIMPFVKTCLMVLPSVQTIWKSVTDAIVAPLCTSIGRSFSSVSLQLSQD) the chain is on the cytoplasmic side.

It belongs to the caveolin family. As to quaternary structure, monomer or homodimer. Interacts with CAV1; the interaction forms a stable heterooligomeric complex that is required for targeting to lipid rafts and for caveolae formation. Tyrosine phosphorylated forms do not form heterooligomers with the Tyr-19-phosphorylated form existing as a monomer or dimer, and the Tyr-27-form as a monomer only. Interacts (tyrosine phosphorylated form) with the SH2 domain-containing proteins, RASA1, NCK1 and SRC. Interacts (tyrosine phosphorylated form) with INSR, the interaction (Tyr-27-phosphorylated form) is increased on insulin stimulation. Interacts (Tyr-19 phosphorylated form) with MAPK1 (phosphorylated form); the interaction, promoted by insulin, leads to nuclear location and MAPK1 activation. Interacts with STAT3; the interaction is increased on insulin-induced tyrosine phosphorylation leading to STAT activation. Phosphorylated on serine and tyrosine residues. CAV1 promotes phosphorylation on Ser-23 which then targets the complex to the plasma membrane, lipid rafts and caveolae. Phosphorylation on Ser-36 appears to modulate mitosis in endothelial cells. Phosphorylation on both Tyr-19 and Tyr-27 is required for insulin-induced 'Ser-727' phosphorylation of STAT3 and its activation. Phosphorylation on Tyr-19 is required for insulin-induced phosphorylation of MAPK1 and DNA binding of STAT3. Tyrosine phosphorylation is induced by both EGF and insulin (By. similarity).

The protein localises to the nucleus. It localises to the cytoplasm. It is found in the golgi apparatus membrane. Its subcellular location is the cell membrane. The protein resides in the membrane. The protein localises to the caveola. In terms of biological role, may act as a scaffolding protein within caveolar membranes. Interacts directly with G-protein alpha subunits and can functionally regulate their activity. Acts as an accessory protein in conjunction with CAV1 in targeting to lipid rafts and driving caveolae formation. The Ser-36 phosphorylated form has a role in modulating mitosis in endothelial cells. Positive regulator of cellular mitogenesis of the MAPK signaling pathway. Required for the insulin-stimulated nuclear translocation and activation of MAPK1 and STAT3, and the subsequent regulation of cell cycle progression. The sequence is that of Caveolin-2 (CAV2) from Aotus nancymaae (Ma's night monkey).